Consider the following 104-residue polypeptide: Putative protein 22K (104 aa).

The tract at residues 35 to 104 (YKQLEKELGE…KAPAAKAPSK (70 aa)) is disordered. Over residues 60–78 (PLSEGELEEISEEEEEEGE) the composition is skewed to acidic residues. Over residues 94 to 104 (SKAPAAKAPSK) the composition is skewed to low complexity.

This chain is Putative protein 22K, found in Snake adenovirus serotype 1 (SnAdV-1).